A 533-amino-acid polypeptide reads, in one-letter code: Protein translocase subunit SecD (533 aa).

The next 6 helical transmembrane spans lie at 8-28 (ALLV…TFVS), 377-397 (IVGG…GGVV), 400-420 (LALA…GFTL), 422-442 (LPGI…NVLI), 469-489 (LTIL…LQFG), and 495-515 (GFAV…IFVT).

Belongs to the SecD/SecF family. SecD subfamily. In terms of assembly, forms a complex with SecF. Part of the essential Sec protein translocation apparatus which comprises SecA, SecYEG and auxiliary proteins SecDF-YajC and YidC.

It is found in the cell inner membrane. In terms of biological role, part of the Sec protein translocase complex. Interacts with the SecYEG preprotein conducting channel. SecDF uses the proton motive force (PMF) to complete protein translocation after the ATP-dependent function of SecA. The protein is Protein translocase subunit SecD of Syntrophobacter fumaroxidans (strain DSM 10017 / MPOB).